A 134-amino-acid chain; its full sequence is Small ribosomal subunit protein uS11 (134 aa).

Residues 1 to 22 form a disordered region; sequence MAQKTRATAARKPRRKVNKNVT. Positions 9-18 are enriched in basic residues; the sequence is AARKPRRKVN.

This sequence belongs to the universal ribosomal protein uS11 family. In terms of assembly, part of the 30S ribosomal subunit. Interacts with proteins S7 and S18. Binds to IF-3.

In terms of biological role, located on the platform of the 30S subunit, it bridges several disparate RNA helices of the 16S rRNA. Forms part of the Shine-Dalgarno cleft in the 70S ribosome. The sequence is that of Small ribosomal subunit protein uS11 from Kocuria rhizophila (strain ATCC 9341 / DSM 348 / NBRC 103217 / DC2201).